The chain runs to 24 residues: Antimicrobial peptide PGQ (24 aa).

The protein belongs to the gastrin/cholecystokinin family. Magainin subfamily. As to expression, is synthesized in the stomach and stored in a novel granular multinucleated cell in the gastric mucosa. It is stored as active, processed peptides in large granules within the granular gland secretions of the skin.

It is found in the secreted. In terms of biological role, antimicrobial peptide. The protein is Antimicrobial peptide PGQ (pgq) of Xenopus laevis (African clawed frog).